The primary structure comprises 101 residues: Large ribosomal subunit protein bL28 (101 aa).

The protein belongs to the bacterial ribosomal protein bL28 family.

The polypeptide is Large ribosomal subunit protein bL28 (Rhodopseudomonas palustris (strain BisB5)).